Here is a 177-residue protein sequence, read N- to C-terminus: MSRIGKYPVEVPKGVTVTLNGQDLAVKGPKGELKLTLVDDVTVEQGESGLKVAPREDTQRARAMWGLSRTLVKNIVTGVTDGFTKTLEINGVGYRAAIQGKNLQLNLGFSHDVLYPIPEGIDIKCTKPTEIVITGIDKQKVGQVAAEIRGYRGPEPYKGKGVKYAGEYIFRKEGKKK.

Belongs to the universal ribosomal protein uL6 family. In terms of assembly, part of the 50S ribosomal subunit.

Its function is as follows. This protein binds to the 23S rRNA, and is important in its secondary structure. It is located near the subunit interface in the base of the L7/L12 stalk, and near the tRNA binding site of the peptidyltransferase center. This is Large ribosomal subunit protein uL6 from Parvibaculum lavamentivorans (strain DS-1 / DSM 13023 / NCIMB 13966).